The following is a 491-amino-acid chain: Probable succinate-semialdehyde dehydrogenase [NADP(+)] (491 aa).

NADP(+)-binding positions include 163–164, 187–190, and 241–242; these read WN, KPAE, and GS. Glutamate 263 functions as the Proton acceptor in the catalytic mechanism. Position 264 (leucine 264) interacts with NADP(+). The Nucleophile role is filled by cysteine 297. Glutamate 394 provides a ligand contact to NADP(+).

The protein belongs to the aldehyde dehydrogenase family.

It carries out the reaction succinate semialdehyde + NADP(+) + H2O = succinate + NADPH + 2 H(+). It functions in the pathway amino-acid degradation; 4-aminobutanoate degradation. Catalyzes the NADP(+) dependent oxidation of succinate semialdehyde to succinate. This Sinorhizobium fredii (strain NBRC 101917 / NGR234) protein is Probable succinate-semialdehyde dehydrogenase [NADP(+)] (gabD).